We begin with the raw amino-acid sequence, 172 residues long: 3-hydroxydecanoyl-[acyl-carrier-protein] dehydratase (172 aa).

H71 is a catalytic residue.

This sequence belongs to the thioester dehydratase family. FabA subfamily. As to quaternary structure, homodimer.

Its subcellular location is the cytoplasm. The catalysed reaction is a (3R)-hydroxyacyl-[ACP] = a (2E)-enoyl-[ACP] + H2O. The enzyme catalyses (3R)-hydroxydecanoyl-[ACP] = (2E)-decenoyl-[ACP] + H2O. It catalyses the reaction (2E)-decenoyl-[ACP] = (3Z)-decenoyl-[ACP]. Its pathway is lipid metabolism; fatty acid biosynthesis. Necessary for the introduction of cis unsaturation into fatty acids. Catalyzes the dehydration of (3R)-3-hydroxydecanoyl-ACP to E-(2)-decenoyl-ACP and then its isomerization to Z-(3)-decenoyl-ACP. Can catalyze the dehydratase reaction for beta-hydroxyacyl-ACPs with saturated chain lengths up to 16:0, being most active on intermediate chain length. This Brucella ovis (strain ATCC 25840 / 63/290 / NCTC 10512) protein is 3-hydroxydecanoyl-[acyl-carrier-protein] dehydratase.